Reading from the N-terminus, the 454-residue chain is F-box/WD-40 repeat-containing protein At3g52030 (454 aa).

In terms of domain architecture, F-box spans 20-66 (PTSIESLDADILCIIFSFLDLFDLVHCTVVCNSWNAVIKRLKLLQAS). WD repeat units follow at residues 85–116 (DRPAEIDVEDFAMKHHKMALLRGRIEIERWEA), 117–153 (HSHRVSQCRMKKGLLLTGVGDKVMRLWSLKSYKCMEE), 170–214 (SKKL…SIFP), 215–255 (SRAG…CSQI), 258–296 (TQGGPITCLSLSDNQLFLSGSSLGRVTVSDPLMDQPVAT), 301–340 (ITAGGIQTICFNQGTNLAFIGTTGGYVSCWDLRKMDRLWE), 343–383 (VSPN…VLSR), and 422–454 (KVRPQISCIAMGMKKMVTAHNGKCISVWKFNLS).

The chain is F-box/WD-40 repeat-containing protein At3g52030 from Arabidopsis thaliana (Mouse-ear cress).